A 393-amino-acid polypeptide reads, in one-letter code: Rubredoxin-NAD(+) reductase (393 aa).

Residues 9–12 (SGMA), 33–34 (CA), lysine 42, valine 80, glutamate 162, aspartate 282, valine 294, and lysine 325 contribute to the FAD site.

It belongs to the FAD-dependent oxidoreductase family. In terms of assembly, homodimer. It depends on FAD as a cofactor.

The protein resides in the cytoplasm. The catalysed reaction is 2 reduced [rubredoxin] + NAD(+) + H(+) = 2 oxidized [rubredoxin] + NADH. The protein operates within hydrocarbon metabolism; alkane degradation. Functionally, involved in the hydrocarbon hydroxylating system, which transfers electrons from NADH to rubredoxin reductase and then through rubredoxin to alkane 1 monooxygenase. This is Rubredoxin-NAD(+) reductase (rubB) from Acinetobacter baylyi (strain ATCC 33305 / BD413 / ADP1).